Here is an 820-residue protein sequence, read N- to C-terminus: Serine/threonine-protein phosphatase 4 regulatory subunit 3-B (820 aa).

The region spanning 1-100 is the WH1 domain; sequence MSDTRRRVKV…DEIWEKICQV (100 aa). Residues 682–694 are compositionally biased toward acidic residues; that stretch reads ELWFNEDDEEEGE. 2 disordered regions span residues 682–711 and 750–820; these read ELWF…DFPE and AANG…RLGS. Positions 701 to 711 are enriched in basic and acidic residues; the sequence is EKTKPEDDFPE. Composition is skewed to polar residues over residues 750–761 and 768–790; these read AANGANSTNSKS and PATS…STKG. Over residues 798-809 the composition is skewed to acidic residues; that stretch reads YPDDEDEEEEED.

The protein belongs to the SMEK family. As to quaternary structure, serine/threonine-protein phosphatase 4 (PP4) occurs in different assemblies of the catalytic and one or more regulatory subunits.

Functionally, regulatory subunit of serine/threonine-protein phosphatase 4 (PP4). The sequence is that of Serine/threonine-protein phosphatase 4 regulatory subunit 3-B from Xenopus laevis (African clawed frog).